The sequence spans 524 residues: Cytochrome P450 monooxygenase ankB (524 aa).

Residues 22–42 (FHALSIQAPGLLLGTLLFYLF) traverse the membrane as a helical segment. C466 provides a ligand contact to heme.

It belongs to the cytochrome P450 family. The cofactor is heme.

It localises to the membrane. The catalysed reaction is cyclo(L-arginyl-tyrosyl) + reduced [NADPH--hemoprotein reductase] + O2 = cyclo(L-arginyl-L-dehydrotyrosyl) + oxidized [NADPH--hemoprotein reductase] + 2 H2O + H(+). It participates in alkaloid biosynthesis. Its function is as follows. Cytochrome P450 monooxygenase; part of the ank cluster that mediates the biosynthesis of NK13650 C, a highly modified cyclo-arginine-tyrosine dipeptide. AnkB is responsible for desaturation of the ankA product cyclo-Arg-Tyr diketopiperazine, likely through hydroxylation of the benzylic position followed by dehydration to yield a dehydro-cyclodipeptide. Within the pathway, the cyclodipeptide synthase ankA acts as the scaffold-generating enzyme and is responsible for formation of the cyclo-Arg-Tyr diketopiperazine (cRY) from L-Arg and L-Tyr. The ankA product cRY is desaturated by the cytochrome P450 monooxygenase ankB to yield a dehydro-cyclodipeptide intermediate. The FAD-dependent monooxygenase ankC then installs the m-OH, ankD catalyzes the attachment of L-homoserine, and ankE ligates citrate to the ankD product to yield NK13650 B. The O-methyltransferase ankF is responsible for methylation of the C-17 phenol group of NK13650 B to produce NK13650 D. Amidation of NK13650 D with L-Asp by ankG then leads to the production of NK13650 C, whereas amidation of NK13650 B produces NK13650 A. This Aspergillus thermomutatus (Neosartorya pseudofischeri) protein is Cytochrome P450 monooxygenase ankB.